A 379-amino-acid chain; its full sequence is Lipid-A-disaccharide synthase (379 aa).

The protein belongs to the LpxB family.

The catalysed reaction is a lipid X + a UDP-2-N,3-O-bis[(3R)-3-hydroxyacyl]-alpha-D-glucosamine = a lipid A disaccharide + UDP + H(+). Its pathway is bacterial outer membrane biogenesis; LPS lipid A biosynthesis. Its function is as follows. Condensation of UDP-2,3-diacylglucosamine and 2,3-diacylglucosamine-1-phosphate to form lipid A disaccharide, a precursor of lipid A, a phosphorylated glycolipid that anchors the lipopolysaccharide to the outer membrane of the cell. This Aeromonas hydrophila subsp. hydrophila (strain ATCC 7966 / DSM 30187 / BCRC 13018 / CCUG 14551 / JCM 1027 / KCTC 2358 / NCIMB 9240 / NCTC 8049) protein is Lipid-A-disaccharide synthase.